The primary structure comprises 226 residues: Small ribosomal subunit protein uS3 (226 aa).

Residues 39 to 107 (VRNFIRKKLA…PVHINIEEIR (69 aa)) enclose the KH type-2 domain.

Belongs to the universal ribosomal protein uS3 family. In terms of assembly, part of the 30S ribosomal subunit. Forms a tight complex with proteins S10 and S14.

Binds the lower part of the 30S subunit head. Binds mRNA in the 70S ribosome, positioning it for translation. The polypeptide is Small ribosomal subunit protein uS3 (Alkalilimnicola ehrlichii (strain ATCC BAA-1101 / DSM 17681 / MLHE-1)).